A 496-amino-acid polypeptide reads, in one-letter code: Cytochrome P450 71D181 (496 aa).

The helical; Signal-anchor for type II membrane protein transmembrane segment at 1 to 21 (MDISISWVAIILVISSYFIFM) threads the bilayer. Heme is bound at residue Cys-435. The segment at 471–496 (MSETPGLSGPRKNPLIMVPTIHNPTS) is disordered.

The protein belongs to the cytochrome P450 family. Heme is required as a cofactor. As to expression, expressed at low levels in flowers, leaves and stems.

Its subcellular location is the membrane. It carries out the reaction alpha-terpinene + 2 reduced [NADPH--hemoprotein reductase] + 2 O2 = carvacrol + 2 oxidized [NADPH--hemoprotein reductase] + 3 H2O + 2 H(+). The enzyme catalyses gamma-terpinene + 2 reduced [NADPH--hemoprotein reductase] + 2 O2 = carvacrol + 2 oxidized [NADPH--hemoprotein reductase] + 3 H2O + 2 H(+). It catalyses the reaction (4S)-limonene + reduced [NADPH--hemoprotein reductase] + O2 = (1S,5R)-carveol + oxidized [NADPH--hemoprotein reductase] + H2O + H(+). The catalysed reaction is (4R)-limonene + reduced [NADPH--hemoprotein reductase] + O2 = (1R,5S)-carveol + oxidized [NADPH--hemoprotein reductase] + H2O + H(+). The protein operates within secondary metabolite biosynthesis; terpenoid biosynthesis. Involved in the biosynthesis of phenolic monoterpenes natural products thymol and carvacrol which have a broad range of biological activities acting as antimicrobial compounds, insecticides, antioxidants and pharmaceutical agents. Catalyzes the C2-hydroxylation of gamma-terpinene and alpha-terpinene to produce carvacrol. Also mediates the C6-hydroxylation of (4S)-limonene and (4R)-limonene to form carveol. This chain is Cytochrome P450 71D181, found in Origanum vulgare (Wild marjoram).